We begin with the raw amino-acid sequence, 70 residues long: Small ribosomal subunit protein bS21 (70 aa).

Belongs to the bacterial ribosomal protein bS21 family.

The sequence is that of Small ribosomal subunit protein bS21 from Helicobacter pylori (strain P12).